We begin with the raw amino-acid sequence, 754 residues long: 5-methyltetrahydropteroyltriglutamate--homocysteine methyltransferase (754 aa).

Residues 17-20 (RELK) and K117 each bind 5-methyltetrahydropteroyltri-L-glutamate. L-homocysteine-binding positions include 431–433 (IGS) and E484. Residues 431–433 (IGS) and E484 each bind L-methionine. 5-methyltetrahydropteroyltri-L-glutamate is bound by residues 515 to 516 (RC) and W561. D599 provides a ligand contact to L-homocysteine. D599 is a binding site for L-methionine. E605 is a binding site for 5-methyltetrahydropteroyltri-L-glutamate. 3 residues coordinate Zn(2+): H641, C643, and E665. H694 functions as the Proton donor in the catalytic mechanism. Residue C726 participates in Zn(2+) binding.

It belongs to the vitamin-B12 independent methionine synthase family. Zn(2+) serves as cofactor.

The enzyme catalyses 5-methyltetrahydropteroyltri-L-glutamate + L-homocysteine = tetrahydropteroyltri-L-glutamate + L-methionine. Its pathway is amino-acid biosynthesis; L-methionine biosynthesis via de novo pathway; L-methionine from L-homocysteine (MetE route): step 1/1. Its function is as follows. Catalyzes the transfer of a methyl group from 5-methyltetrahydrofolate to homocysteine resulting in methionine formation. This Salmonella choleraesuis (strain SC-B67) protein is 5-methyltetrahydropteroyltriglutamate--homocysteine methyltransferase.